Here is a 122-residue protein sequence, read N- to C-terminus: UPF0102 protein Atu0303 (122 aa).

Belongs to the UPF0102 family.

The protein is UPF0102 protein Atu0303 of Agrobacterium fabrum (strain C58 / ATCC 33970) (Agrobacterium tumefaciens (strain C58)).